We begin with the raw amino-acid sequence, 432 residues long: Adenylosuccinate synthetase (432 aa).

Residues 13–19 and 41–43 each bind GTP; these read GDEGKGK and GHT. Aspartate 14 acts as the Proton acceptor in catalysis. Residues aspartate 14 and glycine 41 each contribute to the Mg(2+) site. IMP contacts are provided by residues 14-17, 39-42, threonine 130, arginine 144, glutamine 225, threonine 240, and arginine 306; these read DEGK and NAGH. The active-site Proton donor is the histidine 42. 302 to 308 is a substrate binding site; it reads TVTGRAR. GTP contacts are provided by residues arginine 308, 334–336, and 416–418; these read KLD and STG.

This sequence belongs to the adenylosuccinate synthetase family. As to quaternary structure, homodimer. Mg(2+) is required as a cofactor.

It is found in the cytoplasm. The enzyme catalyses IMP + L-aspartate + GTP = N(6)-(1,2-dicarboxyethyl)-AMP + GDP + phosphate + 2 H(+). The protein operates within purine metabolism; AMP biosynthesis via de novo pathway; AMP from IMP: step 1/2. Functionally, plays an important role in the de novo pathway of purine nucleotide biosynthesis. Catalyzes the first committed step in the biosynthesis of AMP from IMP. This is Adenylosuccinate synthetase from Herminiimonas arsenicoxydans.